The following is a 541-amino-acid chain: Tegument protein UL21 homolog (541 aa).

This sequence belongs to the alphaherpesvirinae UL21 protein family. As to quaternary structure, interacts (via C-terminus) with UL16.

The protein resides in the virion tegument. Its subcellular location is the host cytoplasm. It is found in the host nucleus. May participate in DNA packaging/capsid maturation events. Promotes efficient incorporation of tegument proteins UL46, UL49, and US3 homologs into virions. May also play a role in capsid transport to the trans-Golgi network (TGN). This Varicella-zoster virus (strain Oka vaccine) (HHV-3) protein is Tegument protein UL21 homolog.